Reading from the N-terminus, the 70-residue chain is Guanine nucleotide-binding protein G(I)/G(S)/G(O) subunit gamma-8 (70 aa).

The residue at position 67 (cysteine 67) is a Cysteine methyl ester. Cysteine 67 carries S-geranylgeranyl cysteine lipidation. Positions 68 to 70 (VLL) are cleaved as a propeptide — removed in mature form.

This sequence belongs to the G protein gamma family. G proteins are composed of 3 units, alpha, beta and gamma.

Its subcellular location is the cell membrane. Its function is as follows. Guanine nucleotide-binding proteins (G proteins) are involved as a modulator or transducer in various transmembrane signaling systems. The beta and gamma chains are required for the GTPase activity, for replacement of GDP by GTP, and for G protein-effector interaction. The polypeptide is Guanine nucleotide-binding protein G(I)/G(S)/G(O) subunit gamma-8 (GNG8) (Homo sapiens (Human)).